Reading from the N-terminus, the 499-residue chain is Multiphosphoryl transfer protein (499 aa).

The PTS EIIA type-2 domain occupies 2 to 142 (LELSESNIHL…AEFCAILMGE (141 aa)). The Tele-phosphohistidine intermediate; for EIIA activity role is filled by H62. Residue H62 is modified to Phosphohistidine; by HPr. The m domain stretch occupies residues 155–285 (SLDVNTQSLL…SDVETQSVEG (131 aa)). The HPr 1 domain maps to 286–376 (AVVGTFTIRN…KAIANGLGEN (91 aa)). Catalysis depends on H300, which acts as the Pros-phosphohistidine intermediate; for HPr 1 activity. Residue H300 is modified to Phosphohistidine. Positions 378–409 (SAVPPSEPDTIEIMGDQIHTPAVTEDDNLPAN) are linker. In terms of domain architecture, HPr 2 spans 410 to 499 (AIEAVFVIKN…GAVIESGLGE (90 aa)). H424 is subject to Phosphohistidine. Catalysis depends on H424, which acts as the Pros-phosphohistidine intermediate; for HPr 2 activity.

It localises to the cytoplasm. The phosphoenolpyruvate-dependent sugar phosphotransferase system (sugar PTS), a major carbohydrate active transport system, catalyzes the phosphorylation of incoming sugar substrates concomitantly with their translocation across the cell membrane. The enzyme II FruAB PTS system is involved in fructose transport. The polypeptide is Multiphosphoryl transfer protein (fruB) (Haemophilus influenzae (strain ATCC 51907 / DSM 11121 / KW20 / Rd)).